The primary structure comprises 349 residues: tRNA pseudouridine synthase D (349 aa).

Phenylalanine 27 is a substrate binding site. Catalysis depends on aspartate 80, which acts as the Nucleophile. Asparagine 129 provides a ligand contact to substrate. Residues 155-303 (GVPNYFGAQR…VEAARRAMLL (149 aa)) form the TRUD domain. Residue phenylalanine 329 participates in substrate binding.

It belongs to the pseudouridine synthase TruD family.

It catalyses the reaction uridine(13) in tRNA = pseudouridine(13) in tRNA. Functionally, responsible for synthesis of pseudouridine from uracil-13 in transfer RNAs. This is tRNA pseudouridine synthase D from Escherichia coli O7:K1 (strain IAI39 / ExPEC).